We begin with the raw amino-acid sequence, 62 residues long: Large ribosomal subunit protein bL28 (62 aa).

Residues 1 to 22 (MAKKCAISGKGPMSGNNVSHAK) are disordered.

It belongs to the bacterial ribosomal protein bL28 family.

The sequence is that of Large ribosomal subunit protein bL28 from Sulfurimonas denitrificans (strain ATCC 33889 / DSM 1251) (Thiomicrospira denitrificans (strain ATCC 33889 / DSM 1251)).